The sequence spans 79 residues: UPF0291 protein BH2353 (79 aa).

The tract at residues glycine 57 to histidine 79 is disordered. Basic and acidic residues predominate over residues threonine 63–histidine 79.

This sequence belongs to the UPF0291 family.

It is found in the cytoplasm. This Halalkalibacterium halodurans (strain ATCC BAA-125 / DSM 18197 / FERM 7344 / JCM 9153 / C-125) (Bacillus halodurans) protein is UPF0291 protein BH2353.